A 1736-amino-acid polypeptide reads, in one-letter code: Centrosomal protein of 152 kDa (1736 aa).

An interaction with PLK4 region spans residues 1–60 (MSLEFGSVALQTQNEDEEFDKEDFEREKELQQLLTDLPHDMLDDELSSPERHDSDCSMDG). The disordered stretch occupies residues 1–127 (MSLEFGSVAL…SGYSPPGKRE (127 aa)). 2 stretches are compositionally biased toward basic and acidic residues: residues 61–82 (RAAEPHPSEHLERKWIERDILP) and 94–105 (EENRSKTEDQHL). Coiled-coil stretches lie at residues 228 to 481 (IIQL…AELG), 552 to 651 (HLVS…QEFD), 692 to 776 (LEVY…TERQ), 835 to 868 (AAVSKAEAAAVLAEEQARQVQQEKELATKEALRK), 950 to 1075 (NVMS…YEED), and 1205 to 1315 (GHCF…KIKR). Residues 571–592 (FQQSKDGDSGMETKTDTSEKTT) are disordered. Basic and acidic residues predominate over residues 575 to 592 (KDGDSGMETKTDTSEKTT). The residue at position 1277 (threonine 1277) is a Phosphothreonine. 4 disordered regions span residues 1416-1479 (GTER…ASTA), 1543-1562 (EKNSSPRCISESRHTTLRSP), 1574-1614 (GSPT…SDST), and 1677-1736 (QQGK…SPLE). Positions 1462 to 1473 (RRLEESKHREMR) are enriched in basic and acidic residues. 2 stretches are compositionally biased toward polar residues: residues 1576–1595 (PTETDSIASEKSQGVGSQDS) and 1603–1614 (PSSSPAWPSDST). An N6-acetyllysine modification is found at lysine 1714.

The protein belongs to the CEP152 family. As to quaternary structure, interacts (via N-terminus) with PLK4; the interaction is mutally exclusive with a PLK4:CEP192 interaction. Interacts (via C-terminus) with CPAP (via-N-terminus). Interacts with CINP. Interacts with CDK5RAP2, WDR62, CEP63 and CEP131. CEP63, CDK5RAP2, CEP152, WDR62 are proposed to form a stepwise assembled complex at the centrosome forming a ring near parental centrioles. Interacts with DEUP1; this interaction recruits CEP152 to the deuterosome. The interactions with CEP63 and DEUP1 are mutually exclusive. Interacts with CCDC66.

The protein localises to the cytoplasm. The protein resides in the cytoskeleton. It is found in the microtubule organizing center. Its subcellular location is the centrosome. It localises to the centriole. In terms of biological role, necessary for centrosome duplication; the function also seems to involve CEP63, CDK5RAP2 and WDR62 through a stepwise assembled complex at the centrosome that recruits CDK2 required for centriole duplication. Acts as a molecular scaffold facilitating the interaction of PLK4 and CPAP, 2 molecules involved in centriole formation. Proposed to snatch PLK4 away from PLK4:CEP92 complexes in early G1 daughter centriole and to reposition PLK4 at the outer boundary of a newly forming CEP152 ring structure. Also plays a key role in deuterosome-mediated centriole amplification in multiciliated that can generate more than 100 centrioles. Overexpression of cep152 can drive amplification of centrioles. The protein is Centrosomal protein of 152 kDa (Cep152) of Mus musculus (Mouse).